The following is a 483-amino-acid chain: Protein nucleotidyltransferase YdiU (483 aa).

8 residues coordinate ATP: glycine 81, glycine 83, arginine 84, lysine 103, aspartate 115, glycine 116, arginine 166, and arginine 173. Residue aspartate 244 is the Proton acceptor of the active site. Mg(2+) contacts are provided by asparagine 245 and aspartate 254. Aspartate 254 lines the ATP pocket.

It belongs to the SELO family. Mg(2+) is required as a cofactor. The cofactor is Mn(2+).

The enzyme catalyses L-seryl-[protein] + ATP = 3-O-(5'-adenylyl)-L-seryl-[protein] + diphosphate. It carries out the reaction L-threonyl-[protein] + ATP = 3-O-(5'-adenylyl)-L-threonyl-[protein] + diphosphate. The catalysed reaction is L-tyrosyl-[protein] + ATP = O-(5'-adenylyl)-L-tyrosyl-[protein] + diphosphate. It catalyses the reaction L-histidyl-[protein] + UTP = N(tele)-(5'-uridylyl)-L-histidyl-[protein] + diphosphate. The enzyme catalyses L-seryl-[protein] + UTP = O-(5'-uridylyl)-L-seryl-[protein] + diphosphate. It carries out the reaction L-tyrosyl-[protein] + UTP = O-(5'-uridylyl)-L-tyrosyl-[protein] + diphosphate. Its function is as follows. Nucleotidyltransferase involved in the post-translational modification of proteins. It can catalyze the addition of adenosine monophosphate (AMP) or uridine monophosphate (UMP) to a protein, resulting in modifications known as AMPylation and UMPylation. This Shewanella halifaxensis (strain HAW-EB4) protein is Protein nucleotidyltransferase YdiU.